A 203-amino-acid polypeptide reads, in one-letter code: E3 ubiquitin-protein ligase RNF152 (203 aa).

Residues 12 to 55 (CQICFNYYSPRRRPKLLDCKHTCCSVCLQQMRTSQKDVRCPWCR) form an RING-type zinc finger. A necessary for interaction with RRAGA region spans residues 106 to 165 (ISKERALLPGDMGCRLLPGSQQKSVTVVTVPAEQRPLQGGAPQEAVEEEPDRRGVAKSST). A helical transmembrane segment spans residues 167–187 (SGVCTVILVACVLVFLLGIVL).

This sequence belongs to the RNF152 family. As to quaternary structure, interacts with RRAGA (inactive GDP-bound form); stimulated by amino acid starvation. Ubiquitinated. Autoubiquitinated in vitro, leading to its degradation by the proteasome.

Its subcellular location is the lysosome membrane. It catalyses the reaction S-ubiquitinyl-[E2 ubiquitin-conjugating enzyme]-L-cysteine + [acceptor protein]-L-lysine = [E2 ubiquitin-conjugating enzyme]-L-cysteine + N(6)-ubiquitinyl-[acceptor protein]-L-lysine.. Its pathway is protein modification; protein ubiquitination. In terms of biological role, E3 ubiquitin-protein ligase that acts as a negative regulator of mTORC1 signaling by mediating ubiquitination of RagA/RRAGA and RHEB. Catalyzes 'Lys-63'-linked polyubiquitination of RagA/RRAGA in response to amino acid starvation, thereby regulating mTORC1 signaling. Also mediates monoubiquitination of RHEB, promoting its association with the TSC-TBC complex and subsequent inhibition. Also mediates 'Lys-48'-linked polyubiquitination of target proteins and their subsequent targeting to the proteasome for degradation. Induces apoptosis when overexpressed. The polypeptide is E3 ubiquitin-protein ligase RNF152 (Ailuropoda melanoleuca (Giant panda)).